The chain runs to 158 residues: Ribonucleases P/MRP protein subunit POP6 (158 aa).

Residues 51–71 (KNDNIKKSVNKLDKQINMADR) adopt a coiled-coil conformation.

Component of nuclear RNase P and RNase MRP complexes. RNase P consists of an RNA moiety and at least 9 protein subunits including POP1, POP3, POP4, POP5, POP6, POP7, POP8, RPP1 and RPR2. RNase MRP complex consists of an RNA moiety and at least 10 protein subunits including POP1, POP3, POP4, POP5, POP6, POP7, POP8, RMP1, RPP1 and SNM1, many of which are shared with the RNase P complex.

It is found in the nucleus. The enzyme catalyses Endonucleolytic cleavage of RNA, removing 5'-extranucleotides from tRNA precursor.. In terms of biological role, component of ribonuclease P, a protein complex that generates mature tRNA molecules by cleaving their 5'-ends. Also a component of RNase MRP, which cleaves pre-rRNA sequences. The chain is Ribonucleases P/MRP protein subunit POP6 (POP6) from Saccharomyces cerevisiae (strain ATCC 204508 / S288c) (Baker's yeast).